The primary structure comprises 177 residues: Large ribosomal subunit protein uL6 (177 aa).

The protein belongs to the universal ribosomal protein uL6 family. In terms of assembly, part of the 50S ribosomal subunit.

This protein binds to the 23S rRNA, and is important in its secondary structure. It is located near the subunit interface in the base of the L7/L12 stalk, and near the tRNA binding site of the peptidyltransferase center. This Halorhodospira halophila (strain DSM 244 / SL1) (Ectothiorhodospira halophila (strain DSM 244 / SL1)) protein is Large ribosomal subunit protein uL6.